A 431-amino-acid chain; its full sequence is Serine--tRNA ligase (431 aa).

238–240 serves as a coordination point for L-serine; that stretch reads TSE. 269-271 provides a ligand contact to ATP; it reads RSE. Glu292 contacts L-serine. 356-359 contributes to the ATP binding site; that stretch reads EISS. Residue Ser391 participates in L-serine binding.

The protein belongs to the class-II aminoacyl-tRNA synthetase family. Type-1 seryl-tRNA synthetase subfamily. As to quaternary structure, homodimer. The tRNA molecule binds across the dimer.

Its subcellular location is the cytoplasm. The catalysed reaction is tRNA(Ser) + L-serine + ATP = L-seryl-tRNA(Ser) + AMP + diphosphate + H(+). It catalyses the reaction tRNA(Sec) + L-serine + ATP = L-seryl-tRNA(Sec) + AMP + diphosphate + H(+). It participates in aminoacyl-tRNA biosynthesis; selenocysteinyl-tRNA(Sec) biosynthesis; L-seryl-tRNA(Sec) from L-serine and tRNA(Sec): step 1/1. In terms of biological role, catalyzes the attachment of serine to tRNA(Ser). Is also able to aminoacylate tRNA(Sec) with serine, to form the misacylated tRNA L-seryl-tRNA(Sec), which will be further converted into selenocysteinyl-tRNA(Sec). This is Serine--tRNA ligase from Leptothrix cholodnii (strain ATCC 51168 / LMG 8142 / SP-6) (Leptothrix discophora (strain SP-6)).